The following is a 161-amino-acid chain: Leucine-rich colipase-like protein 1 (161 aa).

The N-terminal stretch at 1 to 25 (MSVSVWPPLLLLLLLLLLWAVPTFQ) is a signal peptide.

The sequence is that of Leucine-rich colipase-like protein 1 (Lrcol1) from Mus musculus (Mouse).